Consider the following 370-residue polypeptide: UDP-N-acetylglucosamine--N-acetylmuramyl-(pentapeptide) pyrophosphoryl-undecaprenol N-acetylglucosamine transferase (370 aa).

UDP-N-acetyl-alpha-D-glucosamine-binding positions include 20 to 22 (TAG), asparagine 134, arginine 170, serine 204, isoleucine 257, and glutamine 301.

It belongs to the glycosyltransferase 28 family. MurG subfamily.

The protein resides in the cell membrane. It catalyses the reaction di-trans,octa-cis-undecaprenyl diphospho-N-acetyl-alpha-D-muramoyl-L-alanyl-D-glutamyl-meso-2,6-diaminopimeloyl-D-alanyl-D-alanine + UDP-N-acetyl-alpha-D-glucosamine = di-trans,octa-cis-undecaprenyl diphospho-[N-acetyl-alpha-D-glucosaminyl-(1-&gt;4)]-N-acetyl-alpha-D-muramoyl-L-alanyl-D-glutamyl-meso-2,6-diaminopimeloyl-D-alanyl-D-alanine + UDP + H(+). The protein operates within cell wall biogenesis; peptidoglycan biosynthesis. Functionally, cell wall formation. Catalyzes the transfer of a GlcNAc subunit on undecaprenyl-pyrophosphoryl-MurNAc-pentapeptide (lipid intermediate I) to form undecaprenyl-pyrophosphoryl-MurNAc-(pentapeptide)GlcNAc (lipid intermediate II). The chain is UDP-N-acetylglucosamine--N-acetylmuramyl-(pentapeptide) pyrophosphoryl-undecaprenol N-acetylglucosamine transferase from Corynebacterium jeikeium (strain K411).